Consider the following 136-residue polypeptide: MARVTVEDCIEKVENRFELVLLASHRARLLAAGAPLTVERDRDKNPVVALREIGDETITAEDLKEQLIHSMQKYVEVDEPEAETVPLLSSSPAAAAVAPQSSSDDKDVQFDRMSEEDLLRGLENLAPPTETDDEGE.

Positions 90–102 are enriched in low complexity; that stretch reads SSPAAAAVAPQSS. A disordered region spans residues 90-136; sequence SSPAAAAVAPQSSSDDKDVQFDRMSEEDLLRGLENLAPPTETDDEGE. The segment covering 103 to 120 has biased composition (basic and acidic residues); the sequence is SDDKDVQFDRMSEEDLLR.

This sequence belongs to the RNA polymerase subunit omega family. In terms of assembly, the RNAP catalytic core consists of 2 alpha, 1 beta, 1 beta' and 1 omega subunit. When a sigma factor is associated with the core the holoenzyme is formed, which can initiate transcription.

It catalyses the reaction RNA(n) + a ribonucleoside 5'-triphosphate = RNA(n+1) + diphosphate. Its function is as follows. Promotes RNA polymerase assembly. Latches the N- and C-terminal regions of the beta' subunit thereby facilitating its interaction with the beta and alpha subunits. This Methylorubrum populi (strain ATCC BAA-705 / NCIMB 13946 / BJ001) (Methylobacterium populi) protein is DNA-directed RNA polymerase subunit omega.